The primary structure comprises 393 residues: Succinate--CoA ligase [ADP-forming] subunit beta (393 aa).

Residues 9–251 enclose the ATP-grasp domain; that stretch reads KALFEKFGVL…LNEEDPKEIE (243 aa). ATP is bound by residues lysine 46, 53-55, serine 109, and glutamate 114; that span reads GRG. Mg(2+)-binding residues include asparagine 206 and aspartate 220. Residues asparagine 271 and 328–330 each bind substrate; that span reads GIM.

It belongs to the succinate/malate CoA ligase beta subunit family. In terms of assembly, heterotetramer of two alpha and two beta subunits. The cofactor is Mg(2+).

The catalysed reaction is succinate + ATP + CoA = succinyl-CoA + ADP + phosphate. The enzyme catalyses GTP + succinate + CoA = succinyl-CoA + GDP + phosphate. The protein operates within carbohydrate metabolism; tricarboxylic acid cycle; succinate from succinyl-CoA (ligase route): step 1/1. Functionally, succinyl-CoA synthetase functions in the citric acid cycle (TCA), coupling the hydrolysis of succinyl-CoA to the synthesis of either ATP or GTP and thus represents the only step of substrate-level phosphorylation in the TCA. The beta subunit provides nucleotide specificity of the enzyme and binds the substrate succinate, while the binding sites for coenzyme A and phosphate are found in the alpha subunit. The protein is Succinate--CoA ligase [ADP-forming] subunit beta of Opitutus terrae (strain DSM 11246 / JCM 15787 / PB90-1).